Consider the following 94-residue polypeptide: Cell division topological specificity factor (94 aa).

Belongs to the MinE family.

Prevents the cell division inhibition by proteins MinC and MinD at internal division sites while permitting inhibition at polar sites. This ensures cell division at the proper site by restricting the formation of a division septum at the midpoint of the long axis of the cell. The polypeptide is Cell division topological specificity factor (Beijerinckia indica subsp. indica (strain ATCC 9039 / DSM 1715 / NCIMB 8712)).